Here is a 337-residue protein sequence, read N- to C-terminus: uncharacterized protein (337 aa).

The F-box domain maps to 22-76 (PFRLLSLPTLALKNVLLHIDFIDLLELSLASKKCEIYMKTCCLKIDSLHFHFRRI).

This is an uncharacterized protein from Caenorhabditis elegans.